A 150-amino-acid polypeptide reads, in one-letter code: Endoribonuclease YbeY (150 aa).

Residues histidine 113, histidine 117, and histidine 123 each contribute to the Zn(2+) site.

The protein belongs to the endoribonuclease YbeY family. It depends on Zn(2+) as a cofactor.

It localises to the cytoplasm. Functionally, single strand-specific metallo-endoribonuclease involved in late-stage 70S ribosome quality control and in maturation of the 3' terminus of the 16S rRNA. The chain is Endoribonuclease YbeY from Syntrophotalea carbinolica (strain DSM 2380 / NBRC 103641 / GraBd1) (Pelobacter carbinolicus).